We begin with the raw amino-acid sequence, 120 residues long: Fumarate reductase subunit D (120 aa).

3 consecutive transmembrane segments (helical) span residues 25 to 45 (FAML…LGIL), 57 to 77 (GFVT…LPMW), and 100 to 120 (IACY…VFMI).

The protein belongs to the FrdD family. As to quaternary structure, part of an enzyme complex containing four subunits: a flavoprotein (FrdA), an iron-sulfur protein (FrdB), and two hydrophobic anchor proteins (FrdC and FrdD).

The protein resides in the cell inner membrane. Anchors the catalytic components of the fumarate reductase complex to the cell membrane, binds quinones. In Photobacterium profundum (strain SS9), this protein is Fumarate reductase subunit D.